Consider the following 477-residue polypeptide: Transposase for insertion sequence element IS231F (477 aa).

This sequence belongs to the transposase 11 family.

Functionally, involved in the transposition of the insertion sequence. This is Transposase for insertion sequence element IS231F from Bacillus thuringiensis subsp. israelensis.